A 355-amino-acid polypeptide reads, in one-letter code: Glutamine synthetase root isozyme 4 (355 aa).

In terms of domain architecture, GS beta-grasp spans 19 to 99 (IIAEYIWIGG…VMCDCYTPAG (81 aa)). The segment at 37-66 (ARTLPGPVTDPSKLPKWNYDGSSTGQAPGE) is disordered. In terms of domain architecture, GS catalytic spans 106 to 355 (KRYSAAKIFS…IAETTIVWKP (250 aa)).

This sequence belongs to the glutamine synthetase family. In terms of assembly, homooctamer. Found in all the tissues examined with higher expression found in tissues of the root, stem and seedling shoot.

The protein resides in the cytoplasm. It carries out the reaction L-glutamate + NH4(+) + ATP = L-glutamine + ADP + phosphate + H(+). Plays a role in the flow of nitrogen into nitrogenous organic compounds. This Zea mays (Maize) protein is Glutamine synthetase root isozyme 4 (GLN5).